The primary structure comprises 317 residues: Large ribosomal subunit protein uL10 (317 aa).

Positions 286-317 (AGAGAAAEKKEEAKKEESESEEDDDMGFGLFD) are disordered. Basic and acidic residues predominate over residues 292–302 (AEKKEEAKKEE).

It belongs to the universal ribosomal protein uL10 family. In terms of assembly, P0 forms a pentameric complex by interaction with dimers of P1 and P2. Post-translationally, phosphorylated.

Its function is as follows. Ribosomal protein P0 is the functional equivalent of E.coli protein L10. This is Large ribosomal subunit protein uL10 (RpLP0) from Ceratitis capitata (Mediterranean fruit fly).